The sequence spans 408 residues: 4-hydroxy-3-methylbut-2-en-1-yl diphosphate synthase (ferredoxin) (408 aa).

Positions 1–21 are enriched in polar residues; that stretch reads MQTLPTPTTSSNTANQSTFDT. Residues 1–26 form a disordered region; it reads MQTLPTPTTSSNTANQSTFDTTIKRR. Cysteine 317, cysteine 320, cysteine 351, and glutamate 358 together coordinate [4Fe-4S] cluster.

The protein belongs to the IspG family. [4Fe-4S] cluster is required as a cofactor.

It catalyses the reaction (2E)-4-hydroxy-3-methylbut-2-enyl diphosphate + 2 oxidized [2Fe-2S]-[ferredoxin] + H2O = 2-C-methyl-D-erythritol 2,4-cyclic diphosphate + 2 reduced [2Fe-2S]-[ferredoxin] + H(+). Its pathway is isoprenoid biosynthesis; isopentenyl diphosphate biosynthesis via DXP pathway; isopentenyl diphosphate from 1-deoxy-D-xylulose 5-phosphate: step 5/6. Functionally, converts 2C-methyl-D-erythritol 2,4-cyclodiphosphate (ME-2,4cPP) into 1-hydroxy-2-methyl-2-(E)-butenyl 4-diphosphate. This is 4-hydroxy-3-methylbut-2-en-1-yl diphosphate synthase (ferredoxin) from Trichormus variabilis (strain ATCC 29413 / PCC 7937) (Anabaena variabilis).